The chain runs to 396 residues: uncharacterized protein (396 aa).

12 consecutive transmembrane segments (helical) span residues 12 to 32 (LLALAVSAFAIGTTEFISVGL), 48 to 68 (GLTVSLYALGVTFGAPILTSL), 78 to 98 (LLWIMFIFIAGNTMAATASSI), 106 to 126 (VISAFSHGVFMSIGSTIAADI), 138 to 158 (IMFTGLTVATVTGVPFGTFIG), 165 to 185 (FAFMVIIAVGIIAFITNGILV), 209 to 229 (LLLLFVITALGYGGTFVVFTY), 242 to 262 (AGTVAVILLGYGIAIAIGNMI), 271 to 291 (PIAALFYMFIVQAIVLFVLTF), 297 to 317 (AAGLITILCMGLLAFMNVPGL), 338 to 358 (AMNIAAFNAGIALGSYLGGVI), and 362 to 382 (IGLIHTAWIGGLMVVGAVILT).

It belongs to the major facilitator superfamily.

It is found in the cell membrane. This is an uncharacterized protein from Bacillus subtilis (strain 168).